A 301-amino-acid chain; its full sequence is Tetratricopeptide repeat domain-containing protein PYG7, chloroplastic (301 aa).

The N-terminal 61 residues, 1–61, are a transit peptide targeting the chloroplast; the sequence is MFESNMVLQT…FHDYVFAEIS (61 aa). 2 helical membrane passes run 82 to 102 and 121 to 141; these read TFLL…AAAA and IQLS…FYVI. TPR repeat units follow at residues 168–201, 206–239, and 240–273; these read ATEL…WDGD, AQVY…QPGY, and VTAW…DPNN.

Interacts with PSA3.

The protein localises to the plastid. It localises to the chloroplast thylakoid membrane. Functionally, nuclear genome-encoded factor required for the accumulation of photosystem I (PSI). Functions as a PSI biogenesis factor. Cooperates with PSA3 to promote the stable assembly of PSI in the thylakoid membrane. May target primarily the PsaC subunit. In Arabidopsis thaliana (Mouse-ear cress), this protein is Tetratricopeptide repeat domain-containing protein PYG7, chloroplastic.